The sequence spans 428 residues: Glutamate-1-semialdehyde 2,1-aminomutase (428 aa).

Lys-265 carries the post-translational modification N6-(pyridoxal phosphate)lysine.

It belongs to the class-III pyridoxal-phosphate-dependent aminotransferase family. HemL subfamily. Homodimer. It depends on pyridoxal 5'-phosphate as a cofactor.

Its subcellular location is the cytoplasm. It carries out the reaction (S)-4-amino-5-oxopentanoate = 5-aminolevulinate. It functions in the pathway porphyrin-containing compound metabolism; protoporphyrin-IX biosynthesis; 5-aminolevulinate from L-glutamyl-tRNA(Glu): step 2/2. This chain is Glutamate-1-semialdehyde 2,1-aminomutase, found in Legionella pneumophila (strain Paris).